The primary structure comprises 380 residues: UDP-N-acetylglucosamine--N-acetylmuramyl-(pentapeptide) pyrophosphoryl-undecaprenol N-acetylglucosamine transferase (380 aa).

UDP-N-acetyl-alpha-D-glucosamine-binding positions include 23-25 (TGG), asparagine 137, arginine 178, serine 210, isoleucine 266, and glutamine 311.

This sequence belongs to the glycosyltransferase 28 family. MurG subfamily.

Its subcellular location is the cell inner membrane. It carries out the reaction di-trans,octa-cis-undecaprenyl diphospho-N-acetyl-alpha-D-muramoyl-L-alanyl-D-glutamyl-meso-2,6-diaminopimeloyl-D-alanyl-D-alanine + UDP-N-acetyl-alpha-D-glucosamine = di-trans,octa-cis-undecaprenyl diphospho-[N-acetyl-alpha-D-glucosaminyl-(1-&gt;4)]-N-acetyl-alpha-D-muramoyl-L-alanyl-D-glutamyl-meso-2,6-diaminopimeloyl-D-alanyl-D-alanine + UDP + H(+). The protein operates within cell wall biogenesis; peptidoglycan biosynthesis. Its function is as follows. Cell wall formation. Catalyzes the transfer of a GlcNAc subunit on undecaprenyl-pyrophosphoryl-MurNAc-pentapeptide (lipid intermediate I) to form undecaprenyl-pyrophosphoryl-MurNAc-(pentapeptide)GlcNAc (lipid intermediate II). This chain is UDP-N-acetylglucosamine--N-acetylmuramyl-(pentapeptide) pyrophosphoryl-undecaprenol N-acetylglucosamine transferase, found in Bacteroides fragilis (strain ATCC 25285 / DSM 2151 / CCUG 4856 / JCM 11019 / LMG 10263 / NCTC 9343 / Onslow / VPI 2553 / EN-2).